The sequence spans 200 residues: NADH-quinone oxidoreductase subunit C (200 aa).

This sequence belongs to the complex I 30 kDa subunit family. In terms of assembly, NDH-1 is composed of 14 different subunits. Subunits NuoB, C, D, E, F, and G constitute the peripheral sector of the complex.

The protein resides in the cell inner membrane. It catalyses the reaction a quinone + NADH + 5 H(+)(in) = a quinol + NAD(+) + 4 H(+)(out). In terms of biological role, NDH-1 shuttles electrons from NADH, via FMN and iron-sulfur (Fe-S) centers, to quinones in the respiratory chain. The immediate electron acceptor for the enzyme in this species is believed to be ubiquinone. Couples the redox reaction to proton translocation (for every two electrons transferred, four hydrogen ions are translocated across the cytoplasmic membrane), and thus conserves the redox energy in a proton gradient. The protein is NADH-quinone oxidoreductase subunit C of Ralstonia nicotianae (strain ATCC BAA-1114 / GMI1000) (Ralstonia solanacearum).